Consider the following 32-residue polypeptide: Turripeptide XIV-18 (32 aa).

Ile30 carries the isoleucine amide modification.

Post-translationally, contains 2 disulfide bonds. In terms of tissue distribution, expressed by the venom duct.

The protein localises to the secreted. This chain is Turripeptide XIV-18, found in Gemmula speciosa (Splendid gem-turris).